The following is a 195-amino-acid chain: MSDEDRTDRATEDHTIFDRGVGQRDQLQRLWTPYRMNYLAEAPVKRDPNSSASPAQPFTEIPQLSDEEGLVVARGKLVYAVLNLYPYNPGHLMVVPYRRVSELEDLTDLESAELMAFTQKAIRVIKNVSRPHGFNVGLNLGTSAGGSLAEHLHVHVVPRWGGDANFITIIGGSKVIPQLLRDTRRLLATEWARQP.

The segment covering 1-17 (MSDEDRTDRATEDHTIF) has biased composition (basic and acidic residues). Positions 1-20 (MSDEDRTDRATEDHTIFDRG) are disordered. In terms of domain architecture, HIT spans 57–166 (PFTEIPQLSD…VPRWGGDANF (110 aa)). Positions 151–155 (HLHVH) match the Histidine triad motif motif. The active-site Tele-AMP-histidine intermediate is the His-153.

Homotetramer. A divalent metal cation is required as a cofactor.

The enzyme catalyses ADP + ATP + H(+) = P(1),P(4)-bis(5'-adenosyl) tetraphosphate + phosphate. Its function is as follows. Catabolizes diadenosine 5',5'''-P1,P4-tetraphosphate (Ap4A) into ADP and ATP. In Mycobacterium tuberculosis (strain CDC 1551 / Oshkosh), this protein is AP-4-A phosphorylase.